We begin with the raw amino-acid sequence, 161 residues long: Nucleotide-binding protein Mmwyl1_2033 (161 aa).

It belongs to the YajQ family.

Its function is as follows. Nucleotide-binding protein. The sequence is that of Nucleotide-binding protein Mmwyl1_2033 from Marinomonas sp. (strain MWYL1).